The chain runs to 496 residues: MADTVEKVPTVVESSSSSTVEASNSAEKTEPTTEKKKWGDVEDDDDEEEAVSELNSLSIKEEEKPDSILEEPEDSNIKAVTSGDTPYTSASRFEDLNLSPELMKGLYVEMKFEKPSKIQAISLPMIMTPPHKHLIAQAHNGSGKTTCFVLGMLSRVDPTLREPQALCICPTRELANQNMEVLQKMGKFTGITAELAVPDSTRGAPAATRGAPVSAHVVIGTPGTLKKWMAFKRLGLNHLKILVFDEADHMLATDGFRDDSLKIMKDIGRVNPNFQVLLFSATFNETVKDFVARTVKDPNQLFVKREDLALDSVKQYKVVCPKEQNKIEVIKDQIMELGDIGQTIIFVKTKASAQKVHKALAEMGYDVTSVHGNLTESDRDKIVKEFKECLTQVLIATDVIARGFDQQRVNLVVNYNLPTKYETGEPDYEVYLHRVGRAGRFGRKGAVFNLLLDDGWDKEVMEKIEKYFEANVKEIKSWNSEEEYKSALKEAGLLDE.

The segment at 1–91 (MADTVEKVPT…SGDTPYTSAS (91 aa)) is disordered. Ala2 carries the post-translational modification N-acetylalanine. Over residues 7 to 25 (KVPTVVESSSSSTVEASNS) the composition is skewed to low complexity. Positions 27-40 (EKTEPTTEKKKWGD) are enriched in basic and acidic residues. Over residues 41 to 51 (VEDDDDEEEAV) the composition is skewed to acidic residues. Positions 78–91 (KAVTSGDTPYTSAS) are enriched in polar residues. A Q motif motif is present at residues 91–120 (SRFEDLNLSPELMKGLYVEMKFEKPSKIQA). In terms of domain architecture, Helicase ATP-binding spans 125–301 (MIMTPPHKHL…ARTVKDPNQL (177 aa)). 138 to 145 (AHNGSGKT) provides a ligand contact to ATP. The short motif at 245 to 248 (DEAD) is the DEAD box element. Residues 329–483 (VIKDQIMELG…EIKSWNSEEE (155 aa)) enclose the Helicase C-terminal domain.

It belongs to the DEAD box helicase family. DDX19/DBP5 subfamily. In terms of assembly, interacts with NUP214 (via N-terminus). Constitutively expressed.

Its subcellular location is the cytoplasm. It is found in the nucleus. The enzyme catalyses ATP + H2O = ADP + phosphate + H(+). In terms of biological role, ATP-dependent RNA helicase essential for mRNA export from the nucleus. Plays an important role in the positive regulation of CBF/DREB transcription factors. This Arabidopsis thaliana (Mouse-ear cress) protein is DEAD-box ATP-dependent RNA helicase 38 (RH38).